The primary structure comprises 177 residues: Interleukin-7 (177 aa).

The first 25 residues, 1-25 (MFHVSFRYIFGLPPLILVLLPVASS), serve as a signal peptide directing secretion. 3 disulfides stabilise this stretch: Cys-27-Cys-166, Cys-59-Cys-154, and Cys-72-Cys-117. Residues Asn-95, Asn-116, and Asn-141 are each glycosylated (N-linked (GlcNAc...) asparagine).

It belongs to the IL-7/IL-9 family. Interacts with IL7R and CSF2RG.

Its subcellular location is the secreted. Its function is as follows. Hematopoietic cytokine that plays an essential role in the development, expansion, and survival of naive and memory T-cells and B-cells thereby regulating the number of mature lymphocytes and maintaining lymphoid homeostasis. Mechanistically, exerts its biological effects through a receptor composed of IL7RA subunit and the cytokine receptor common subunit gamma/CSF2RG. Binding to the receptor leads to activation of various kinases including JAK1 or JAK3 depending on the cell type and subsequently propagation of signals through activation of several downstream signaling pathways including the PI3K/Akt/mTOR or the JAK-STAT5. This Homo sapiens (Human) protein is Interleukin-7 (IL7).